The primary structure comprises 246 residues: MSNRDTLFSTPVANLGDWTFDERVAEVFPDMIQRSVPGYANIISMIGMLAERFVQEDSQVYDLGCSLGAATLSVRRNIKASGCRIIAVDNSPAMVERCRRHIDAFRADTPVEVIEADIRRVPIENASLVVLNFTLQFLRPEERQQLLNTIWQGLKPGGALVLSEKFSFNDADVGELLFNMHHDFKRANGYSELEISQKRSMLENVMLTDSVETHKQRLKLAGFQHAELWFQCFNFGSLVALKAGHA.

Residues Y39, 64 to 66 (GCS), 89 to 90 (DN), 117 to 118 (DI), N132, and R199 each bind S-adenosyl-L-methionine.

It belongs to the class I-like SAM-binding methyltransferase superfamily. Cx-SAM synthase family. As to quaternary structure, homodimer.

It carries out the reaction prephenate + S-adenosyl-L-methionine = carboxy-S-adenosyl-L-methionine + 3-phenylpyruvate + H2O. Catalyzes the conversion of S-adenosyl-L-methionine (SAM) to carboxy-S-adenosyl-L-methionine (Cx-SAM). The sequence is that of Carboxy-S-adenosyl-L-methionine synthase from Erwinia tasmaniensis (strain DSM 17950 / CFBP 7177 / CIP 109463 / NCPPB 4357 / Et1/99).